The chain runs to 436 residues: Chorion-specific transcription factor GCMa (436 aa).

Positions 14–169 form a DNA-binding region, GCM; sequence LSWDINDVKL…KLEAEARRAM (156 aa). Zn(2+) is bound by residues Cys76, Cys82, Cys86, Cys113, Cys116, Cys125, His152, and His154. The segment at 171-202 is disordered; that stretch reads KVNTAPSSVSLSLKGSTETRSLPGETQSQGSL. Over residues 174-202 the composition is skewed to polar residues; the sequence is TAPSSVSLSLKGSTETRSLPGETQSQGSL.

In terms of processing, polyubiquitinated in the presence of UBE2D2 and FBXW2 (in vitro). In terms of tissue distribution, highly expressed in the placenta. Expressed in trophoblast cells of the villi.

It localises to the nucleus. Its function is as follows. Transcription factor involved in the control of expression of placental growth factor (PGF) and other placenta-specific genes. Binds to the trophoblast-specific element 2 (TSE2) of the aromatase gene enhancer. Binds to the SYDE1 promoter. Has a central role in mediating the differentiation of trophoblast cells along both the villous and extravillous pathways in placental development. The sequence is that of Chorion-specific transcription factor GCMa (GCM1) from Homo sapiens (Human).